We begin with the raw amino-acid sequence, 527 residues long: 4-alpha-glucanotransferase (527 aa).

The protein belongs to the disproportionating enzyme family.

The protein localises to the cytoplasm. The enzyme catalyses Transfers a segment of a (1-&gt;4)-alpha-D-glucan to a new position in an acceptor, which may be glucose or a (1-&gt;4)-alpha-D-glucan.. The sequence is that of 4-alpha-glucanotransferase (malQ) from Chlamydia muridarum (strain MoPn / Nigg).